Here is a 231-residue protein sequence, read N- to C-terminus: Large ribosomal subunit protein uL1 (231 aa).

The protein belongs to the universal ribosomal protein uL1 family. As to quaternary structure, part of the 50S ribosomal subunit.

Functionally, binds directly to 23S rRNA. The L1 stalk is quite mobile in the ribosome, and is involved in E site tRNA release. Its function is as follows. Protein L1 is also a translational repressor protein, it controls the translation of the L11 operon by binding to its mRNA. The sequence is that of Large ribosomal subunit protein uL1 from Verminephrobacter eiseniae (strain EF01-2).